Here is a 245-residue protein sequence, read N- to C-terminus: MIKLVLIRHGQSLWNLENRFTGWTDVDLSENGLSEAREAGAILKKNGYTFDVAYTSVLKRAIRTLWIVLHEMDLAWIPVHKCWKLNERHYGALQGLNKDETAKKYGEEQVHIWRRSIDVRPPALTEDDPRYEMNDPRYKALKKGELPLTECLVDTEKRVLAYWHSEIAPSLKSGEKVIISSHGNTIRSLVKYLDNLSSDGVVSLNIPTSIPLVYELDDNLRPIRHYYLSMDGEVPEGEIPKHISF.

Substrate contacts are provided by residues 8–15, 21–22, Arg60, 87–90, Lys98, 114–115, and 183–184; these read RHGQSLWN, TG, ERHY, RR, and GN. The active-site Tele-phosphohistidine intermediate is His9. Glu87 acts as the Proton donor/acceptor in catalysis.

It belongs to the phosphoglycerate mutase family. BPG-dependent PGAM subfamily.

It carries out the reaction (2R)-2-phosphoglycerate = (2R)-3-phosphoglycerate. It functions in the pathway carbohydrate degradation; glycolysis; pyruvate from D-glyceraldehyde 3-phosphate: step 3/5. Catalyzes the interconversion of 2-phosphoglycerate and 3-phosphoglycerate. The chain is 2,3-bisphosphoglycerate-dependent phosphoglycerate mutase 1 from Bacillus cereus (strain ATCC 10987 / NRS 248).